Here is a 261-residue protein sequence, read N- to C-terminus: Glucose 1-dehydrogenase (261 aa).

11–35 (VITGSSTGLGKSMAIRFATEKAKVV) is a binding site for NADP(+). Ser-145 serves as a coordination point for substrate. Tyr-158 (proton acceptor) is an active-site residue.

This sequence belongs to the short-chain dehydrogenases/reductases (SDR) family. In terms of assembly, homotetramer.

It catalyses the reaction D-glucose + NAD(+) = D-glucono-1,5-lactone + NADH + H(+). The enzyme catalyses D-glucose + NADP(+) = D-glucono-1,5-lactone + NADPH + H(+). The protein is Glucose 1-dehydrogenase of Priestia megaterium (Bacillus megaterium).